A 486-amino-acid chain; its full sequence is Coronin-1B (486 aa).

Ser2 carries the post-translational modification Phosphoserine; by PKC. WD repeat units lie at residues 80–120 (GHTG…LTSP), 130–170 (GHTK…ELYR), 174–213 (LHPD…LVAE), 217–260 (AHEG…EPMA), and 265–305 (DSSN…PYIH). Residues 404–444 (LKVSRRNVLSDSRPTSAARPAAPAPAAPAPAAAASSSLSGA) form a disordered region. Residues 432-444 (APAAAASSSLSGA) show a composition bias toward low complexity. The stretch at 446–484 (EAGKLEEVMRELRALRALVKEQGERIGRLEEQLGRVENG) forms a coiled coil.

It belongs to the WD repeat coronin family. As to quaternary structure, forms homooligomers, but does not form complexes with the other coronins. Interacts with Arp2/3 complex components, including ACTR2, ARPC1B and ARPC2. Binds actin. In terms of processing, phosphorylated in vivo by PKC in response to cholinergic stimulation. Phosphorylation on Ser-2 regulates the interaction with the Arp2/3 complex and cell motility in fibroblasts. Phosphorylation does not seem to affect subcellular location.

Its subcellular location is the cytoplasm. The protein localises to the cytoskeleton. It localises to the stress fiber. Regulates leading edge dynamics and cell motility in fibroblasts. May be involved in cytokinesis and signal transduction. This is Coronin-1B (CORO1B) from Oryctolagus cuniculus (Rabbit).